Here is an 824-residue protein sequence, read N- to C-terminus: DNA replication helicase (824 aa).

90-97 (GTAGAGKT) is an ATP binding site.

Belongs to the herpesviridae helicase family. As to quaternary structure, associates with the primase and the primase-associated factor to form the helicase-primase complex.

Its subcellular location is the host nucleus. Its function is as follows. Component of the helicase/primase complex. Unwinds the DNA at the replication forks and generates single-stranded DNA for both leading and lagging strand synthesis. The primase synthesizes short RNA primers on the lagging strand that the polymerase elongates using dNTPs. Possesses helicase-like motifs and therefore may act as the helicase subunit of the complex. The polypeptide is DNA replication helicase (Human herpesvirus 6B (strain Z29) (HHV-6 variant B)).